Reading from the N-terminus, the 360-residue chain is Phosphoserine aminotransferase (360 aa).

Arginine 42 contacts L-glutamate. Pyridoxal 5'-phosphate is bound by residues alanine 76–serine 77, tryptophan 102, threonine 152, aspartate 172, and glutamine 195. At lysine 196 the chain carries N6-(pyridoxal phosphate)lysine. Position 237-238 (asparagine 237–threonine 238) interacts with pyridoxal 5'-phosphate.

It belongs to the class-V pyridoxal-phosphate-dependent aminotransferase family. SerC subfamily. In terms of assembly, homodimer. Pyridoxal 5'-phosphate is required as a cofactor.

The protein resides in the cytoplasm. The enzyme catalyses O-phospho-L-serine + 2-oxoglutarate = 3-phosphooxypyruvate + L-glutamate. The catalysed reaction is 4-(phosphooxy)-L-threonine + 2-oxoglutarate = (R)-3-hydroxy-2-oxo-4-phosphooxybutanoate + L-glutamate. The protein operates within amino-acid biosynthesis; L-serine biosynthesis; L-serine from 3-phospho-D-glycerate: step 2/3. Catalyzes the reversible conversion of 3-phosphohydroxypyruvate to phosphoserine and of 3-hydroxy-2-oxo-4-phosphonooxybutanoate to phosphohydroxythreonine. In Bacillus thuringiensis subsp. konkukian (strain 97-27), this protein is Phosphoserine aminotransferase.